Consider the following 576-residue polypeptide: V-type ATP synthase alpha chain (576 aa).

238 to 245 is an ATP binding site; sequence GPFGAGKT.

It belongs to the ATPase alpha/beta chains family.

It catalyses the reaction ATP + H2O + 4 H(+)(in) = ADP + phosphate + 5 H(+)(out). Its function is as follows. Produces ATP from ADP in the presence of a proton gradient across the membrane. The V-type alpha chain is a catalytic subunit. This chain is V-type ATP synthase alpha chain, found in Borrelia turicatae (strain 91E135).